We begin with the raw amino-acid sequence, 127 residues long: Large ribosomal subunit protein uL22 (127 aa).

This sequence belongs to the universal ribosomal protein uL22 family. In terms of assembly, part of the 50S ribosomal subunit.

Functionally, this protein binds specifically to 23S rRNA; its binding is stimulated by other ribosomal proteins, e.g. L4, L17, and L20. It is important during the early stages of 50S assembly. It makes multiple contacts with different domains of the 23S rRNA in the assembled 50S subunit and ribosome. Its function is as follows. The globular domain of the protein is located near the polypeptide exit tunnel on the outside of the subunit, while an extended beta-hairpin is found that lines the wall of the exit tunnel in the center of the 70S ribosome. The sequence is that of Large ribosomal subunit protein uL22 from Methylobacterium sp. (strain 4-46).